We begin with the raw amino-acid sequence, 198 residues long: Beta-crystallin A1-1 (198 aa).

An N-terminal arm region spans residues 1-13 (MAQINPLPVPLGP). Beta/gamma crystallin 'Greek key' domains lie at 14–53 (WKIT…KVEC) and 54–100 (GAWI…RPIC). Residues 101–106 (SANHKE) form a connecting peptide region. 2 consecutive Beta/gamma crystallin 'Greek key' domains span residues 107-148 (SKLV…KVQC) and 149-197 (GAWV…RRIQ).

It belongs to the beta/gamma-crystallin family. In terms of assembly, homo/heterodimer, or complexes of higher-order. The structure of beta-crystallin oligomers seems to be stabilized through interactions between the N-terminal arms. The N-terminus is blocked.

Crystallins are the dominant structural components of the vertebrate eye lens. This is Beta-crystallin A1-1 from Aquarana catesbeiana (American bullfrog).